The following is a 604-amino-acid chain: Kelch-like protein 20 (604 aa).

The 68-residue stretch at 63–130 (CDVVLVVGAK…SYTSQITVEE (68 aa)) folds into the BTB domain. The region spanning 165–267 (CLGIRAFADT…SPKFLVGTVG (103 aa)) is the BACK domain. 6 Kelch repeats span residues 314–360 (VLFA…VLDD), 362–408 (LYAV…VLGG), 409–455 (YLYA…VLGG), 457–502 (LYAV…VYQD), 504–549 (IYAV…VVNG), and 551–596 (LMAV…VIKM).

As to quaternary structure, component of the BCR(KLHL20) E3 ubiquitin ligase complex, at least composed of cul3, klhl20 and rbx1.

It is found in the cytoplasm. It localises to the perinuclear region. The protein localises to the nucleus. The protein operates within protein modification; protein ubiquitination. Its function is as follows. Substrate-specific adapter of a BCR (BTB-CUL3-RBX1) E3 ubiquitin-protein ligase complex involved in interferon response and anterograde Golgi to endosome transport. The BCR(KLHL20) E3 ubiquitin ligase complex mediates the ubiquitination of target proteins, leading to their degradation by the proteasome. It also specifically mediates 'Lys-33'-linked ubiquitination. The protein is Kelch-like protein 20 (klhl20) of Xenopus laevis (African clawed frog).